An 80-amino-acid polypeptide reads, in one-letter code: Exodeoxyribonuclease 7 small subunit (80 aa).

Belongs to the XseB family. Heterooligomer composed of large and small subunits.

The protein localises to the cytoplasm. It catalyses the reaction Exonucleolytic cleavage in either 5'- to 3'- or 3'- to 5'-direction to yield nucleoside 5'-phosphates.. Functionally, bidirectionally degrades single-stranded DNA into large acid-insoluble oligonucleotides, which are then degraded further into small acid-soluble oligonucleotides. In Rickettsia typhi (strain ATCC VR-144 / Wilmington), this protein is Exodeoxyribonuclease 7 small subunit.